The following is a 343-amino-acid chain: 3-dehydroquinate synthase (343 aa).

Residues serine 61–lysine 66, glycine 95–valine 96, threonine 119–threonine 120, lysine 132, lysine 141, asparagine 142, and phenylalanine 159–threonine 162 contribute to the NAD(+) site. 3 residues coordinate Zn(2+): glutamate 174, histidine 231, and histidine 248.

The protein belongs to the sugar phosphate cyclases superfamily. Dehydroquinate synthase family. Homodimer. The cofactor is NAD(+). It depends on Co(2+) as a cofactor. Requires Zn(2+) as cofactor.

The protein resides in the cytoplasm. The catalysed reaction is 7-phospho-2-dehydro-3-deoxy-D-arabino-heptonate = 3-dehydroquinate + phosphate. It participates in metabolic intermediate biosynthesis; chorismate biosynthesis; chorismate from D-erythrose 4-phosphate and phosphoenolpyruvate: step 2/7. Its function is as follows. Catalyzes the conversion of 3-deoxy-D-arabino-heptulosonate 7-phosphate (DAHP) to dehydroquinate (DHQ). The sequence is that of 3-dehydroquinate synthase from Helicobacter pylori (strain ATCC 700392 / 26695) (Campylobacter pylori).